The sequence spans 129 residues: Small ribosomal subunit protein uS11 (129 aa).

The protein belongs to the universal ribosomal protein uS11 family. As to quaternary structure, part of the 30S ribosomal subunit. Interacts with proteins S7 and S18. Binds to IF-3.

Located on the platform of the 30S subunit, it bridges several disparate RNA helices of the 16S rRNA. Forms part of the Shine-Dalgarno cleft in the 70S ribosome. The sequence is that of Small ribosomal subunit protein uS11 from Stenotrophomonas maltophilia (strain R551-3).